Consider the following 530-residue polypeptide: MEASISFLGSTKPNISLFNPSSNVLPRRDFPLPALKLKKVSVLPRILHQKRLIRAQCSDGFKPEEDDGFVLEDVPHLTKFLPDLPSYPNPLKESQAYAIVKRTFVSSEDVVAQNIVVQKGSKRGVHFRRAGPRERVYFRSDEVKACIVTCGGLCPGINTVIREIVCGLNNMYGVNNILGIQGGYRGFYSKNTMNLTPKVVNDIHKRGGTFLQTSRGGHDTAKIVDNIQDRGINQVYIIGGGGTQKGAEKIYEEVERRGLQVAVSGIPKTIDNDIAVIDKSFGFDTAVEEAQRAINAAHVEVESVENGVGIVKLMGRYSGFIAMIATLANRDVDCCLIPESPFFLEGKGGLFEFIEERLKENRHMVIVIAEGAGQDYVAQSMRASETKDASGNRLLLDVGLWLTQQIKDHFTNVRKMMINMKYIDPTYMIRAIPSNASDNVYCTLLAQSAVHGAMAGYSGFTVGPVNSRHAYIPISQVTEVTNTVKLTDRMWARLLASTNQPSFLTGEGALQNVIDMETQEKIDNMKISSI.

The transit peptide at 1–54 directs the protein to the chloroplast; the sequence is MEASISFLGSTKPNISLFNPSSNVLPRRDFPLPALKLKKVSVLPRILHQKRLIR. A Phosphoserine modification is found at Ser121. ATP is bound by residues Gly152, 215 to 216, and 240 to 243; these read RG and GGGT. Substrate contacts are provided by residues 269 to 271, 314 to 316, Glu370, and 427 to 430; these read TID, MGR, and YMIR. Catalysis depends on Asp271, which acts as the Proton acceptor.

It belongs to the phosphofructokinase type A (PFKA) family. PPi-dependent PFK group II subfamily. Atypical ATP-dependent clade 'X' sub-subfamily. In terms of assembly, homotetramer. Requires Mg(2+) as cofactor. In terms of tissue distribution, expressed in leaves, stems and flowers.

The protein resides in the plastid. Its subcellular location is the chloroplast. The catalysed reaction is beta-D-fructose 6-phosphate + ATP = beta-D-fructose 1,6-bisphosphate + ADP + H(+). It participates in carbohydrate degradation; glycolysis; D-glyceraldehyde 3-phosphate and glycerone phosphate from D-glucose: step 3/4. With respect to regulation, allosterically activated by AMP. Its function is as follows. Catalyzes the phosphorylation of D-fructose 6-phosphate to fructose 1,6-bisphosphate by ATP, the first committing step of glycolysis. The protein is ATP-dependent 6-phosphofructokinase 4, chloroplastic of Arabidopsis thaliana (Mouse-ear cress).